The following is a 353-amino-acid chain: Outer membrane protein A (353 aa).

Positions 1–21 (MKKTAIALAVALVGFATVAQA) are cleaved as a signal peptide. Transmembrane regions (beta stranded) follow at residues 27 to 37 (TWYTGGKLGWS), 56 to 67 (QLGAGAFFGYQA), 71 to 79 (LGFEMGYDW), 97 to 108 (QGVQLAAKLSYP), 113 to 121 (LDVYTRLGG), 148 to 157 (PLVALGAEYA), 162 to 169 (WATRMEYQ), and 188 to 196 (LLSVGVSYR). Tandem repeats lie at residues 208–209 (AP), 210–211 (TP), 212–213 (AP), and 214–215 (AP). The segment at 208 to 215 (APTPAPAP) is 4 X 2 AA approximate tandem repeats of A-P. Positions 217-345 (VDTKRFTLKS…RVEIEVKGYK (129 aa)) constitute an OmpA-like domain. Cysteines 318 and 330 form a disulfide.

The protein belongs to the outer membrane OOP (TC 1.B.6) superfamily. OmpA family. Monomer and homodimer.

The protein resides in the cell outer membrane. Its function is as follows. With TolR probably plays a role in maintaining the position of the peptidoglycan cell wall in the periplasm. Acts as a porin with low permeability that allows slow penetration of small solutes; an internal gate slows down solute passage. This Yersinia pseudotuberculosis serotype I (strain IP32953) protein is Outer membrane protein A.